The primary structure comprises 2332 residues: MKKVPIKPEQPEKLRAFNISTHSFSLHWSLPSGHVERYQVDLVPDSGFVTIRDLGGGEYQVDVSNVVPGTRYDITISSISTTYTSPVTRIVTTNVTKPGPPVFLAGERVGSAGILLSWNTPPNPNGRIISYIVKYKEVCPWMQTVYTQVRSKPDSLEVLLTNLNPGTTYEIKVAAENSAGIGVFSDPFLFQTAESAPGKVVNLTVEAYNASAVKLIWYLPRQPNGKITSFKISVKHARSGIVVKDVSIRVEDILTGKLPECNENSESFLWSTASPSPTLGRVTPPSRTTHSSSTLTQNEISSVWKEPISFVVTHLRPYTTYLFEVSAVTTEAGYIDSTIVRTPESVPEGPPQNCVTGNITGKSFSILWDPPTIVTGKFSYRVELYGPSGRILDNSTKDLKFAFTNLTPFTMYDVYIAAETSAGTGPKSNISVFTPPDVPGAVFDLQLAEVESTQVRITWKKPRQPNGIINQYRVKVLVPETGIILENTLLTGNNEYINDPMAPEIVNIVEPMVGLYEGSAEMSSDLHSLATFIYNSHPDKNFPARNRAEDQTSPVVTTRNQYITDIAAEQLSYVIRRLVPFTEHMISVSAFTIMGEGPPTVLSVRTRQQVPSSIKIINYKNISSSSILLYWDPPEYPNGKITHYTIYAMELDTNRAFQITTIDNSFLITGLKKYTKYKMRVAASTHVGESSLSEENDIFVRTSEDEPESSPQDVEVIDVTADEIRLKWSPPEKPNGIIIAYEVLYKNIDTLYMKNTSTTDIILRNLRPHTLYNISVRSYTRFGHGNQVSSLLSVRTSETVPDSAPENITYKNISSGEIELSFLPPSSPNGIIKKYTIYLKRSNGNEERTINTTSLTQNIKVLKKYTQYIIEVSASTLKGEGVRSAPISILTEEDAPDSPPQDFSVKQLSGVTVKLSWQPPLEPNGIILYYTVYVWNRSSLKTINVTETSLELSDLDYNVEYSAYVTASTRFGDGKTRSNIISFQTPEGAPSDPPKDVYYANLSSSSIILFWTPPSKPNGIIQYYSVYYRNTSGTFMQNFTLHEVTNDFDNMTVSTIIDKLTIFSYYTFWLTASTSVGNGNKSSDIIEVYTDQDIPEGFVGNLTYESISSTAINVSWVPPAQPNGLVFYYVSLILQQTPRHVRPPLVTYERSIYFDNLEKYTDYILKITPSTEKGFSDTYTAQLYIKTEEDVPETSPIINTFKNLSSTSVLLSWDPPVKPNGAIISYDLTLQGPNENYSFITSDNYIILEELSPFTLYSFFAAARTRKGLGPSSILFFYTDESVPLAPPQNLTLINCTSDFVWLKWSPSPLPGGIVKVYSFKIHEHETDTIYYKNISGFKTEAKLVGLEPVSTYSIRVSAFTKVGNGNQFSNVVKFTTQESVPDVVQNMQCMATSWQSVLVKWDPPKKANGIITQYMVTVERNSTKVSPQDHMYTFIKLLANTSYVFKVRASTSAGEGDESTCHVSTLPETVPSVPTNIAFSDVQSTSATLTWIRPDTILGYFQNYKITTQLRAQKCKEWESEECVEYQKIQYLYEAHLTEETVYGLKKFRWYRFQVAASTNAGYGNASNWISTKTLPGPPDGPPENVHVVATSPFSISISWSEPAVITGPTCYLIDVKSVDNDEFNISFIKSNEENKTIEIKDLEIFTRYSVVITAFTGNISAAYVEGKSSAEMIVTTLESAPKDPPNNMTFQKIPDEVTKFQLTFLPPSQPNGNIQVYQALVYREDDPTAVQIHNLSIIQKTNTFVIAMLEGLKGGHTYNISVYAVNSAGAGPKVPMRITMDIKAPARPKTKPTPIYDATGKLLVTSTTITIRMPICYYSDDHGPIKNVQVLVTETGAQHDGNVTKWYDAYFNKARPYFTNEGFPNPPCTEGKTKFSGNEEIYIIGADNACMIPGNEDKICNGPLKPKKQYLFKFRATNIMGQFTDSDYSDPVKTLGEGLSERTVEIILSVTLCILSIILLGTAIFAFARIRQKQKEGGTYSPQDAEIIDTKLKLDQLITVADLELKDERLTRPISKKSFLQHVEELCTNNNLKFQEEFSELPKFLQDLSSTDADLPWNRAKNRFPNIKPYNNNRVKLIADASVPGSDYINASYISGYLCPNEFIATQGPLPGTVGDFWRMVWETRAKTLVMLTQCFEKGRIRCHQYWPEDNKPVTVFGDIVITKLMEDVQIDWTIRDLKIERHGDCMTVRQCNFTAWPEHGVPENSAPLIHFVKLVRASRAHDTTPMIVHCSAGVGRTGVFIALDHLTQHINDHDFVDIYGLVAELRSERMCMVQNLAQYIFLHQCILDLLSNKGSNQPICFVNYSALQKMDSLDAMEGDVELEWEETTM.

Residues 1-35 (MKKVPIKPEQPEKLRAFNISTHSFSLHWSLPSGHV) form the signal peptide. 18 Fibronectin type-III domains span residues 36–99 (ERYQ…TKPG), 100–195 (PPVF…TAES), 199–294 (KVVN…SSST), 350–438 (PPQN…PPDV), 441–539 (AVFD…SHPD), 514–606 (GLYE…SVRT), 610–705 (VPSS…TSED), 710–799 (SPQD…TSET), 804–894 (APEN…TEED), 899–988 (PPQD…TPEG), 993–1093 (PPKD…TDQD), 1098–1190 (FVGN…TEED), 1192–1282 (PETS…TDES), 1287–1380 (PPQN…TQES), 1384–1470 (VVQN…LPET), 1474–1578 (VPTN…TLPG), 1583–1681 (PPEN…TLES), and 1686–1787 (PPNN…IKAP). Residues 36-1947 (ERYQVDLVPD…GEGLSERTVE (1912 aa)) are Extracellular-facing. N-linked (GlcNAc...) asparagine glycosylation occurs at Asn-94. 2 N-linked (GlcNAc...) asparagine glycosylation sites follow: Asn-202 and Asn-394. 4 N-linked (GlcNAc...) asparagine glycosylation sites follow: Asn-944, Asn-1038, Asn-1080, and Asn-1101. Asn-1290 and Asn-1295 each carry an N-linked (GlcNAc...) asparagine glycan. N-linked (GlcNAc...) asparagine glycosylation occurs at Asn-1844. The helical transmembrane segment at 1948–1968 (IILSVTLCILSIILLGTAIFA) threads the bilayer. Residues 1969-2332 (FARIRQKQKE…VELEWEETTM (364 aa)) lie on the Cytoplasmic side of the membrane. In terms of domain architecture, Tyrosine-protein phosphatase spans 2036–2292 (FQEEFSELPK…IFLHQCILDL (257 aa)). Cys-2233 functions as the Phosphocysteine intermediate in the catalytic mechanism.

Belongs to the protein-tyrosine phosphatase family. Receptor class 2A subfamily. Interacts with TPRN. TPRN, CLIC5 and PTPQR form concentric rings at the base of stereocilia and may form a complex. In terms of tissue distribution, in developing kidney, it localizes to the basal membrane of podocytes, beginning when podocyte progenitors can first be identified in the embryonic kidney (at protein level). Expressed in lung and kidney.

The protein resides in the cell projection. It localises to the stereocilium. The protein localises to the apical cell membrane. Its subcellular location is the basal cell membrane. The enzyme catalyses a 1,2-diacyl-sn-glycero-3-phospho-(1D-myo-inositol-3,4,5-trisphosphate) + H2O = a 1,2-diacyl-sn-glycero-3-phospho-(1D-myo-inositol-4,5-bisphosphate) + phosphate. It carries out the reaction a 1,2-diacyl-sn-glycero-3-phospho-(1D-myo-inositol-3,4,5-trisphosphate) + H2O = a 1,2-diacyl-sn-glycero-3-phospho-(1D-myo-inositol-3,4-bisphosphate) + phosphate. The catalysed reaction is a 1,2-diacyl-sn-glycero-3-phospho-(1D-myo-inositol-3,5-bisphosphate) + H2O = a 1,2-diacyl-sn-glycero-3-phospho-(1D-myo-inositol-5-phosphate) + phosphate. It catalyses the reaction a 1,2-diacyl-sn-glycero-3-phospho-(1D-myo-inositol-3,5-bisphosphate) + H2O = a 1,2-diacyl-sn-glycero-3-phospho-(1D-myo-inositol-3-phosphate) + phosphate. In terms of biological role, dephosphorylates phosphatidylinositol phosphates, such as phosphatidylinositol 3,4,5-trisphosphate (PIP3) and phosphatidylinositol 3,5-diphosphates, with preference for PIP3. Phosphate can be hydrolyzed from the D3 and D5 positions in the inositol ring. Has low tyrosine-protein phosphatase activity in vitro; however, the relevance of such activity in vivo is unclear. Plays an important role in adipogenesis of mesenchymal stem cells (MSCs). Regulates the phosphorylation state of AKT1 by regulating the levels of PIP3 in MSCs and preadipocyte cells. Required for hair bundle maturation, a process that enables hair cells to detect and transmit sound and balance signals effectively, therefore affecting auditory function. May act by regulating the level of phosphatidylinositol 4,5-bisphosphate (PIP2) level in the basal region of hair bundles. The protein is Phosphatidylinositol phosphatase PTPRQ (PTPRQ) of Homo sapiens (Human).